Reading from the N-terminus, the 655-residue chain is FYVE, RhoGEF and PH domain-containing protein 2 (655 aa).

Phosphoserine occurs at positions 11 and 48. A disordered region spans residues V18–E64. The span at Q32–N56 shows a compositional bias: basic and acidic residues. Residues P102 to A290 enclose the DH domain. Positions T319–D418 constitute a PH 1 domain. The segment at D458–T518 adopts an FYVE-type zinc-finger fold. Zn(2+) is bound by residues C464, C467, C481, C484, C489, C492, C510, and C513. In terms of domain architecture, PH 2 spans Q544–S641. Phosphoserine is present on S654.

Its subcellular location is the cytoplasm. It is found in the cytoskeleton. The protein resides in the nucleus. The protein localises to the early endosome. It localises to the early endosome membrane. Its subcellular location is the cell projection. It is found in the ruffle membrane. In terms of biological role, activates CDC42, a member of the Ras-like family of Rho- and Rac proteins, by exchanging bound GDP for free GTP. Activates JNK1 via CDC42 but not RAC1. Binds to phosphatidylinositol 4,5-bisphosphate, phosphatidylinositol 3,4,5-trisphosphate, phosphatidylinositol 5-monophosphate, phosphatidylinositol 4-monophosphate and phosphatidylinositol 3-monophosphate. The sequence is that of FYVE, RhoGEF and PH domain-containing protein 2 (FGD2) from Homo sapiens (Human).